A 387-amino-acid chain; its full sequence is Type 2 DNA topoisomerase 6 subunit A (387 aa).

The region spanning 12–160 (EARKKAADTL…MLILSKEKGK (149 aa)) is the Topo IIA-type catalytic domain. Y106 (O-(5'-phospho-DNA)-tyrosine intermediate) is an active-site residue. Mg(2+) is bound by residues E207 and D259.

The protein belongs to the TOP6A family. As to quaternary structure, homodimer. Heterotetramer of two Top6A and two Top6B chains. It depends on Mg(2+) as a cofactor.

It catalyses the reaction ATP-dependent breakage, passage and rejoining of double-stranded DNA.. Functionally, relaxes both positive and negative superturns and exhibits a strong decatenase activity. The chain is Type 2 DNA topoisomerase 6 subunit A from Sulfurisphaera tokodaii (strain DSM 16993 / JCM 10545 / NBRC 100140 / 7) (Sulfolobus tokodaii).